Here is a 238-residue protein sequence, read N- to C-terminus: UPF0758 protein Ajs_3450 (238 aa).

Positions 116–238 (VFDSPQAVQH…ALSMAEQGLV (123 aa)) constitute an MPN domain. Zn(2+) is bound by residues His-187, His-189, and Asp-200. Positions 187–200 (HNHPSGSVQPSRAD) match the JAMM motif motif.

The protein belongs to the UPF0758 family.

This is UPF0758 protein Ajs_3450 from Acidovorax sp. (strain JS42).